We begin with the raw amino-acid sequence, 197 residues long: Transmembrane protein 126A (197 aa).

Over 1–35 (MENHEPDGTIIKENLTDIIARKINQLPEAERNLLE) the chain is Mitochondrial matrix. Residues 36–56 (NGSTYVGLNAALCGLIANSLF) traverse the membrane as a helical segment. Topologically, residues 57-58 (RR) are mitochondrial intermembrane. A helical transmembrane segment spans residues 59–79 (ILHVTQARIAAGLPMAVIPFL). Over 80–107 (TANVSYKGFVSLPLNTGDLQCETCTVTR) the chain is Mitochondrial matrix. A helical transmembrane segment spans residues 108-128 (GGLVGLVFGGLYPVFLAIPVN). Over 129 to 160 (GGLAARYNSALLPEKGNILNYWIRISKPVFRK) the chain is Mitochondrial intermembrane. A helical membrane pass occupies residues 161–177 (MLFPILLQTGFAAYLGS). Residues 178–197 (RQYKLLIKALQLPEPGLEIE) lie on the Mitochondrial matrix side of the membrane.

This sequence belongs to the TMEM126 family. As to quaternary structure, interacts with OXA1L; promoting cotranslational quality control in mitochondria.

The protein localises to the mitochondrion inner membrane. Its function is as follows. Protein required for the cotranslational protein quality control in the inner membrane of the mitochondria. Associates with newly synthesized polypeptides and may act as a chaperone that cooperates with OXA1L for the insertion of newly synthesized mitochondrial proteins into the inner membrane. Required for the assembly of the ND4 module of mitochondrial complex I. This chain is Transmembrane protein 126A (TMEM126A), found in Bos taurus (Bovine).